A 155-amino-acid polypeptide reads, in one-letter code: Interleukin-2 (155 aa).

The first 20 residues, 1–20 (MYRMQLLSCIALTLALVANG), serve as a signal peptide directing secretion. A glycan (O-linked (GalNAc...) threonine) is linked at threonine 23. Residues cysteine 79 and cysteine 127 are joined by a disulfide bond.

It belongs to the IL-2 family.

It is found in the secreted. Functionally, cytokine produced by activated CD4-positive helper T-cells and to a lesser extend activated CD8-positive T-cells and natural killer (NK) cells that plays pivotal roles in the immune response and tolerance. Binds to a receptor complex composed of either the high-affinity trimeric IL-2R (IL2RA/CD25, IL2RB/CD122 and IL2RG/CD132) or the low-affinity dimeric IL-2R (IL2RB and IL2RG). Interaction with the receptor leads to oligomerization and conformation changes in the IL-2R subunits resulting in downstream signaling starting with phosphorylation of JAK1 and JAK3. In turn, JAK1 and JAK3 phosphorylate the receptor to form a docking site leading to the phosphorylation of several substrates including STAT5. This process leads to activation of several pathways including STAT, phosphoinositide-3-kinase/PI3K and mitogen-activated protein kinase/MAPK pathways. Functions as a T-cell growth factor and can increase NK-cell cytolytic activity as well. Promotes strong proliferation of activated B-cells and subsequently immunoglobulin production. Plays a pivotal role in regulating the adaptive immune system by controlling the survival and proliferation of regulatory T-cells, which are required for the maintenance of immune tolerance. Moreover, participates in the differentiation and homeostasis of effector T-cell subsets, including Th1, Th2, Th17 as well as memory CD8-positive T-cells. This Capra hircus (Goat) protein is Interleukin-2 (IL2).